The following is a 365-amino-acid chain: Transcription factor aptf-1 (365 aa).

2 disordered regions span residues 13-40 (EFVR…PFYE) and 93-126 (TPPQ…SNYS). Residues 223 to 356 (RRKQANVTAW…MIDESIKYID (134 aa)) are H-S-H (helix-span-helix), dimerization.

Belongs to the AP-2 family. As to quaternary structure, binds DNA as a dimer. In terms of tissue distribution, expressed in five interneurons AIB, RIB and RIS.

Its subcellular location is the nucleus. In terms of biological role, transcription factor, which is required in the single sleep-active ring interneuron RIS for sleep-like behavioral quiescence induced by neuropeptide signaling in larvae. Regulates gene expression of sleep-inducing FMRFamide-like neuropeptide flp-11 in RIS. This Caenorhabditis elegans protein is Transcription factor aptf-1.